A 551-amino-acid polypeptide reads, in one-letter code: Hydroxylamine reductase (551 aa).

The [2Fe-2S] cluster site is built by C3, C6, C18, and C25. Positions 249, 273, 317, 405, 433, 458, 492, and 494 each coordinate hybrid [4Fe-2O-2S] cluster. The residue at position 405 (C405) is a Cysteine persulfide.

It belongs to the HCP family. Requires [2Fe-2S] cluster as cofactor. Hybrid [4Fe-2O-2S] cluster is required as a cofactor.

It localises to the cytoplasm. It carries out the reaction A + NH4(+) + H2O = hydroxylamine + AH2 + H(+). In terms of biological role, catalyzes the reduction of hydroxylamine to form NH(3) and H(2)O. This chain is Hydroxylamine reductase, found in Edwardsiella ictaluri (strain 93-146).